Reading from the N-terminus, the 311-residue chain is Delta-1-pyrroline-5-carboxylate reductase kk1I (311 aa).

Positions 1 to 31 (MTKRESNTLAVLGCGMVFLVSLLDLANRLLG) are cleaved as a signal peptide. Asn-59 is a glycosylation site (N-linked (GlcNAc...) asparagine).

It belongs to the pyrroline-5-carboxylate reductase family.

Its pathway is secondary metabolite biosynthesis. Functionally, delta-1-pyrroline-5-carboxylate reductase; part of the gene cluster that mediates the biosynthesis of KK-1, a novel cyclic depsipeptide with 10 residues which is a promising active compound with high activity against many plant pathogens, especially Botrytis cinerea. Within the pathway, kk1I catalyzes the synthesis of the L-pipecolic acid residue of KK-1 from delta-1-pyrroline-5-carboxylate (P5C), a metabolic intermediate of lysine. The nonribosomal peptide synthetase (NRPS) kk1B catalyzes the elongation and cyclization of the decapeptide chain composed of 1 D-lactic acid residue (D-Lac), 1 pipecolic acid residue (Pip), 1 aspartic acid residue (Asp), 1 isoleucine residue (Ile), 1 glycine residue (Gly), 1 tyrosine residue (Tyr) and 4 valine residues (Val). The Asp, Ile and 3 Val residues are N-methylated by the 5 methyltransferase domains from the NRPS (found in modules 3, 5, 6, 7 and 9), whereas the Tyr residue is O-methylated by the cluster encoded O-methyltransferase kk1A. The thioesterase kk1J is likely to be involved in the corrective mechanism of peptide chain synthesis. The D-lactate dehydrogenase kk1H is involved in the synthesis of D-lactic acid from pyruvic acid, which is recognized by the A domain of the first kk1B module. The pyrroline-5-carboxylate reductase kk1I is involved in the synthesis of the L-pipecolic acid residue of KK-1 from delta-1-pyrroline-5-carboxylate (P5C), a metabolic intermediate of lysine. It still is unclear how kk1C and kk1D are involved in the production of KK-1. This chain is Delta-1-pyrroline-5-carboxylate reductase kk1I, found in Curvularia clavata.